Consider the following 403-residue polypeptide: Cysteine desulfurase IscS (403 aa).

Pyridoxal 5'-phosphate-binding positions include 75 to 76, Asn-155, Gln-183, and 203 to 205; these read AT and SAH. Lys-206 bears the N6-(pyridoxal phosphate)lysine mark. Thr-243 serves as a coordination point for pyridoxal 5'-phosphate. Cys-328 acts as the Cysteine persulfide intermediate in catalysis. Residue Cys-328 coordinates [2Fe-2S] cluster.

The protein belongs to the class-V pyridoxal-phosphate-dependent aminotransferase family. NifS/IscS subfamily. As to quaternary structure, homodimer. Forms a heterotetramer with IscU, interacts with other sulfur acceptors. Requires pyridoxal 5'-phosphate as cofactor.

The protein localises to the cytoplasm. The enzyme catalyses (sulfur carrier)-H + L-cysteine = (sulfur carrier)-SH + L-alanine. Its pathway is cofactor biosynthesis; iron-sulfur cluster biosynthesis. Functionally, master enzyme that delivers sulfur to a number of partners involved in Fe-S cluster assembly, tRNA modification or cofactor biosynthesis. Catalyzes the removal of elemental sulfur atoms from cysteine to produce alanine. Functions as a sulfur delivery protein for Fe-S cluster synthesis onto IscU, an Fe-S scaffold assembly protein, as well as other S acceptor proteins. The polypeptide is Cysteine desulfurase IscS (Psychromonas ingrahamii (strain DSM 17664 / CCUG 51855 / 37)).